The following is a 279-amino-acid chain: Coiled-coil domain-containing protein 106 (279 aa).

The stretch at 62-101 (KAQLHMALERNSWLQKRIEDLEEERDFLRCQLDKFISSAR) forms a coiled coil. Basic and acidic residues predominate over residues 109-121 (RMKPGPRRVDGDS). The interval 109–173 (RMKPGPRRVD…FGKTKARERQ (65 aa)) is disordered. Residue Ser-129 is modified to Phosphoserine. The Bipartite nuclear localization signal motif lies at 151–164 (KRQKQKGSTSRKRF). Basic residues predominate over residues 151–167 (KRQKQKGSTSRKRFGKT).

In terms of assembly, interacts with p53/TP53.

It localises to the nucleus. Functionally, promotes the degradation of p53/TP53 protein and inhibits its transactivity. This is Coiled-coil domain-containing protein 106 (Ccdc106) from Mus musculus (Mouse).